The chain runs to 502 residues: Arabinose import ATP-binding protein AraG (502 aa).

ABC transporter domains lie at 5-240 (LEFS…MVGR) and 253-496 (LGGI…LPDK). An ATP-binding site is contributed by 37 to 44 (GENGAGKS).

The protein belongs to the ABC transporter superfamily. Arabinose importer (TC 3.A.1.2.2) family. The complex is composed of two ATP-binding proteins (AraG), two transmembrane proteins (AraH) and a solute-binding protein (AraF).

It localises to the cell inner membrane. The enzyme catalyses L-arabinose(out) + ATP + H2O = L-arabinose(in) + ADP + phosphate + H(+). Part of the ABC transporter complex AraFGH involved in arabinose import. Responsible for energy coupling to the transport system. This chain is Arabinose import ATP-binding protein AraG, found in Rhizobium johnstonii (strain DSM 114642 / LMG 32736 / 3841) (Rhizobium leguminosarum bv. viciae).